Consider the following 168-residue polypeptide: Large ribosomal subunit protein uL10 (168 aa).

It belongs to the universal ribosomal protein uL10 family. Part of the ribosomal stalk of the 50S ribosomal subunit. The N-terminus interacts with L11 and the large rRNA to form the base of the stalk. The C-terminus forms an elongated spine to which L12 dimers bind in a sequential fashion forming a multimeric L10(L12)X complex.

Functionally, forms part of the ribosomal stalk, playing a central role in the interaction of the ribosome with GTP-bound translation factors. In Ralstonia pickettii (strain 12J), this protein is Large ribosomal subunit protein uL10.